Consider the following 188-residue polypeptide: Ribose 1,5-bisphosphate phosphokinase PhnN (188 aa).

9–16 (GPSGAGKD) contacts ATP.

This sequence belongs to the ribose 1,5-bisphosphokinase family.

The enzyme catalyses alpha-D-ribose 1,5-bisphosphate + ATP = 5-phospho-alpha-D-ribose 1-diphosphate + ADP. It participates in metabolic intermediate biosynthesis; 5-phospho-alpha-D-ribose 1-diphosphate biosynthesis; 5-phospho-alpha-D-ribose 1-diphosphate from D-ribose 5-phosphate (route II): step 3/3. In terms of biological role, catalyzes the phosphorylation of ribose 1,5-bisphosphate to 5-phospho-D-ribosyl alpha-1-diphosphate (PRPP). In Pectobacterium atrosepticum (strain SCRI 1043 / ATCC BAA-672) (Erwinia carotovora subsp. atroseptica), this protein is Ribose 1,5-bisphosphate phosphokinase PhnN.